The following is a 321-amino-acid chain: Glucokinase (321 aa).

Residue 8–13 (GDVGGT) coordinates ATP.

This sequence belongs to the bacterial glucokinase family.

The protein localises to the cytoplasm. The catalysed reaction is D-glucose + ATP = D-glucose 6-phosphate + ADP + H(+). In Salmonella choleraesuis (strain SC-B67), this protein is Glucokinase.